Reading from the N-terminus, the 166-residue chain is Lithostathine-1-beta (166 aa).

The signal sequence occupies residues 1 to 22; it reads MAQTNSFFMLISSLMFLSLSQG. T27 carries O-linked (GalNAc...) threonine glycosylation. Positions 34 to 164 constitute a C-type lectin domain; it reads ISCPEGTNAY…EKKFSFVCKF (131 aa). 3 disulfides stabilise this stretch: C36/C47, C64/C162, and C137/C154.

Post-translationally, all O-linked glycans consist of Gal-GlcNAc-Gal-GalNAc tetrasaccharide core and get elongated (microheterogeneity).

Its subcellular location is the secreted. In terms of biological role, might act as an inhibitor of spontaneous calcium carbonate precipitation. May be associated with neuronal sprouting in brain, and with brain and pancreas regeneration. The sequence is that of Lithostathine-1-beta (REG1B) from Homo sapiens (Human).